We begin with the raw amino-acid sequence, 393 residues long: Lipid-A-disaccharide synthase (393 aa).

It belongs to the LpxB family.

The enzyme catalyses a lipid X + a UDP-2-N,3-O-bis[(3R)-3-hydroxyacyl]-alpha-D-glucosamine = a lipid A disaccharide + UDP + H(+). Its pathway is bacterial outer membrane biogenesis; LPS lipid A biosynthesis. Functionally, condensation of UDP-2,3-diacylglucosamine and 2,3-diacylglucosamine-1-phosphate to form lipid A disaccharide, a precursor of lipid A, a phosphorylated glycolipid that anchors the lipopolysaccharide to the outer membrane of the cell. The protein is Lipid-A-disaccharide synthase of Bordetella petrii (strain ATCC BAA-461 / DSM 12804 / CCUG 43448).